A 264-amino-acid chain; its full sequence is S-adenosylmethionine decarboxylase proenzyme (264 aa).

Ser-112 (schiff-base intermediate with substrate; via pyruvic acid) is an active-site residue. Ser-112 carries the post-translational modification Pyruvic acid (Ser); by autocatalysis. His-117 serves as the catalytic Proton acceptor; for processing activity. Catalysis depends on Cys-140, which acts as the Proton donor; for catalytic activity.

It belongs to the prokaryotic AdoMetDC family. Type 2 subfamily. Heterooctamer of four alpha and four beta chains arranged as a tetramer of alpha/beta heterodimers. The cofactor is pyruvate. Is synthesized initially as an inactive proenzyme. Formation of the active enzyme involves a self-maturation process in which the active site pyruvoyl group is generated from an internal serine residue via an autocatalytic post-translational modification. Two non-identical subunits are generated from the proenzyme in this reaction, and the pyruvate is formed at the N-terminus of the alpha chain, which is derived from the carboxyl end of the proenzyme. The post-translation cleavage follows an unusual pathway, termed non-hydrolytic serinolysis, in which the side chain hydroxyl group of the serine supplies its oxygen atom to form the C-terminus of the beta chain, while the remainder of the serine residue undergoes an oxidative deamination to produce ammonia and the pyruvoyl group blocking the N-terminus of the alpha chain.

The catalysed reaction is S-adenosyl-L-methionine + H(+) = S-adenosyl 3-(methylsulfanyl)propylamine + CO2. The protein operates within amine and polyamine biosynthesis; S-adenosylmethioninamine biosynthesis; S-adenosylmethioninamine from S-adenosyl-L-methionine: step 1/1. Functionally, catalyzes the decarboxylation of S-adenosylmethionine to S-adenosylmethioninamine (dcAdoMet), the propylamine donor required for the synthesis of the polyamines spermine and spermidine from the diamine putrescine. This is S-adenosylmethionine decarboxylase proenzyme from Salmonella gallinarum (strain 287/91 / NCTC 13346).